The following is a 66-amino-acid chain: Small ribosomal subunit protein bS21A (66 aa).

The span at 34-46 (KHYEKPSVKKKRK) shows a compositional bias: basic residues. A disordered region spans residues 34-66 (KHYEKPSVKKKRKQMEAERKRRKAQRFRKPDRD).

The protein belongs to the bacterial ribosomal protein bS21 family.

This Geobacter sulfurreducens (strain ATCC 51573 / DSM 12127 / PCA) protein is Small ribosomal subunit protein bS21A.